Consider the following 207-residue polypeptide: Dephospho-CoA kinase (207 aa).

The DPCK domain occupies 12–207 (LIGITGMIGG…LYSTLLGKML (196 aa)). 20–25 (GGGKST) contacts ATP.

This sequence belongs to the CoaE family.

It is found in the cytoplasm. It catalyses the reaction 3'-dephospho-CoA + ATP = ADP + CoA + H(+). It participates in cofactor biosynthesis; coenzyme A biosynthesis; CoA from (R)-pantothenate: step 5/5. In terms of biological role, catalyzes the phosphorylation of the 3'-hydroxyl group of dephosphocoenzyme A to form coenzyme A. In Leptospira interrogans serogroup Icterohaemorrhagiae serovar Lai (strain 56601), this protein is Dephospho-CoA kinase.